Consider the following 481-residue polypeptide: Glutamyl-tRNA(Gln) amidotransferase subunit A (481 aa).

Residues lysine 74 and serine 149 each act as charge relay system in the active site. The Acyl-ester intermediate role is filled by serine 173.

This sequence belongs to the amidase family. GatA subfamily. Heterotrimer of A, B and C subunits.

The catalysed reaction is L-glutamyl-tRNA(Gln) + L-glutamine + ATP + H2O = L-glutaminyl-tRNA(Gln) + L-glutamate + ADP + phosphate + H(+). Functionally, allows the formation of correctly charged Gln-tRNA(Gln) through the transamidation of misacylated Glu-tRNA(Gln) in organisms which lack glutaminyl-tRNA synthetase. The reaction takes place in the presence of glutamine and ATP through an activated gamma-phospho-Glu-tRNA(Gln). The protein is Glutamyl-tRNA(Gln) amidotransferase subunit A of Francisella tularensis subsp. novicida (strain U112).